The following is a 299-amino-acid chain: tRNA dimethylallyltransferase (299 aa).

Residue Gly13–Thr20 coordinates ATP. Thr15–Thr20 is a binding site for substrate. The segment at Asp38–Gln41 is interaction with substrate tRNA.

It belongs to the IPP transferase family. As to quaternary structure, monomer. It depends on Mg(2+) as a cofactor.

It carries out the reaction adenosine(37) in tRNA + dimethylallyl diphosphate = N(6)-dimethylallyladenosine(37) in tRNA + diphosphate. Functionally, catalyzes the transfer of a dimethylallyl group onto the adenine at position 37 in tRNAs that read codons beginning with uridine, leading to the formation of N6-(dimethylallyl)adenosine (i(6)A). This chain is tRNA dimethylallyltransferase, found in Prochlorococcus marinus (strain MIT 9211).